The primary structure comprises 201 residues: Protein LIGHT-DEPENDENT SHORT HYPOCOTYLS 2 (201 aa).

Positions 1 to 14 (MDLISQNHNNRNPN) are enriched in polar residues. Disordered regions lie at residues 1–37 (MDLISQNHNNRNPNTSLSTQTPSSFSSPPSSSRYENQ) and 151–201 (SRGV…GATQ). The segment covering 15–32 (TSLSTQTPSSFSSPPSSS) has biased composition (low complexity). In terms of domain architecture, ALOG spans 33–160 (RYENQKRRDW…SRGVSYEKKR (128 aa)). Positions 158-162 (KKRKR) match the Nuclear localization signal motif.

Belongs to the plant homeotic and developmental regulators ALOG protein family.

The protein localises to the nucleus. Probable transcription regulator that acts as a developmental regulator by promoting cell growth in response to light. In Arabidopsis thaliana (Mouse-ear cress), this protein is Protein LIGHT-DEPENDENT SHORT HYPOCOTYLS 2 (LSH2).